Reading from the N-terminus, the 191-residue chain is UPF0149 protein plu3602 (191 aa).

This sequence belongs to the UPF0149 family.

The polypeptide is UPF0149 protein plu3602 (Photorhabdus laumondii subsp. laumondii (strain DSM 15139 / CIP 105565 / TT01) (Photorhabdus luminescens subsp. laumondii)).